We begin with the raw amino-acid sequence, 511 residues long: Maturase K (511 aa).

This sequence belongs to the intron maturase 2 family. MatK subfamily.

The protein resides in the plastid. Usually encoded in the trnK tRNA gene intron. Probably assists in splicing its own and other chloroplast group II introns. The sequence is that of Maturase K from Lathraea clandestina (Purple toothwort).